We begin with the raw amino-acid sequence, 214 residues long: MQAYQRDFIRFAIDRGVLRFGEFTLKSGRTSPYFFNAGLFNSGSALAQLGRFYAAAIVESGISFDVLFGPAYKGIPLAAATAVALAEHHGQDLPWCFNRKEAKAHGEGGSLVGAPLTGDVLIIDDVITAGTAIREVMQIIASQDGAKAAGVLIALNRQERGNGELSAIQEVERDFGIPVVSIVSLNQVLQFLEDDPQLKQHLPAVRAYREQFGV.

Lys26 serves as a coordination point for 5-phospho-alpha-D-ribose 1-diphosphate. 34-35 (FF) serves as a coordination point for orotate. 5-phospho-alpha-D-ribose 1-diphosphate is bound by residues 72 to 73 (YK), Arg99, Lys100, Lys103, His105, and 124 to 132 (DDVITAGTA). Residues Thr128 and Arg157 each contribute to the orotate site.

It belongs to the purine/pyrimidine phosphoribosyltransferase family. PyrE subfamily. As to quaternary structure, homodimer. Mg(2+) is required as a cofactor.

The catalysed reaction is orotidine 5'-phosphate + diphosphate = orotate + 5-phospho-alpha-D-ribose 1-diphosphate. The protein operates within pyrimidine metabolism; UMP biosynthesis via de novo pathway; UMP from orotate: step 1/2. In terms of biological role, catalyzes the transfer of a ribosyl phosphate group from 5-phosphoribose 1-diphosphate to orotate, leading to the formation of orotidine monophosphate (OMP). This is Orotate phosphoribosyltransferase from Pseudomonas fluorescens (strain SBW25).